The primary structure comprises 480 residues: Coronin-2B (480 aa).

7 WD repeats span residues 29–77 (HCFD…GRIE), 78–127 (PNYP…RNMT), 128–170 (EALL…LDVG), 171–212 (EPVK…PRSG), 213–259 (RVLQ…EDLS), 260–305 (MPLI…TEKP), and 306–345 (YLSY…KLVT). Residues 436–479 (NELLRMFFRQQDEIRRLKEELAQKDIRIRQLQLELKNLRNSPKN) are a coiled coil.

This sequence belongs to the WD repeat coronin family. Binds to F-actin and to vinculin. In terms of tissue distribution, expressed predominantly in brain.

It is found in the cytoplasm. It localises to the cytoskeleton. In terms of biological role, may play a role in the reorganization of neuronal actin structure. This chain is Coronin-2B (CORO2B), found in Homo sapiens (Human).